The chain runs to 867 residues: Leucine--tRNA ligase (867 aa).

The 'HIGH' region signature appears at 57–67 (PYPSGTLHMGH). Residues 308–327 (SQDERTSDDQPKRGVPTGAV) are disordered. Residues 309–319 (QDERTSDDQPK) are compositionally biased toward basic and acidic residues. Residues 631 to 635 (KMSKS) carry the 'KMSKS' region motif. Lys634 contacts ATP.

The protein belongs to the class-I aminoacyl-tRNA synthetase family.

It localises to the cytoplasm. The enzyme catalyses tRNA(Leu) + L-leucine + ATP = L-leucyl-tRNA(Leu) + AMP + diphosphate. The polypeptide is Leucine--tRNA ligase (Synechococcus sp. (strain CC9311)).